Consider the following 700-residue polypeptide: Methionine--tRNA ligase (700 aa).

The 'HIGH' region motif lies at 16-26 (PYANGAFHVGH). Positions 148, 151, 161, and 164 each coordinate Zn(2+). The 'KMSKS' region signature appears at 337 to 341 (KMSKS). K340 is an ATP binding site. The 107-residue stretch at 594–700 (DFAKIDLRIA…PGAEPGMRVG (107 aa)) folds into the tRNA-binding domain.

It belongs to the class-I aminoacyl-tRNA synthetase family. MetG type 1 subfamily. In terms of assembly, homodimer. Zn(2+) is required as a cofactor.

It localises to the cytoplasm. It carries out the reaction tRNA(Met) + L-methionine + ATP = L-methionyl-tRNA(Met) + AMP + diphosphate. Functionally, is required not only for elongation of protein synthesis but also for the initiation of all mRNA translation through initiator tRNA(fMet) aminoacylation. This is Methionine--tRNA ligase from Janthinobacterium sp. (strain Marseille) (Minibacterium massiliensis).